The chain runs to 247 residues: PHD finger protein ALFIN-LIKE 3 (247 aa).

Residues 147–178 (DRSGVDSSGKSKHSTKRTGEGQVKRSRVVAEE) are disordered. The PHD-type zinc-finger motif lies at 188 to 240 (ETFCGTCGGLYNANEFWIGCDICERWFHGKCVRITPAKAEHIKHYKCPDCSSS).

It belongs to the Alfin family. As to quaternary structure, interacts with H3K4me3 and to a lesser extent with H3K4me2.

The protein resides in the nucleus. In terms of biological role, histone-binding component that specifically recognizes H3 tails trimethylated on 'Lys-4' (H3K4me3), which mark transcription start sites of virtually all active genes. The chain is PHD finger protein ALFIN-LIKE 3 from Oryza sativa subsp. indica (Rice).